The chain runs to 860 residues: Spindle and centriole-associated protein 1 (860 aa).

4 disordered regions span residues Arg127–Gln150, Asp172–Arg201, Ala230–Gln250, and Pro294–Ser332. 3 stretches are compositionally biased toward polar residues: residues Pro139–Gln150, Glu190–Asn200, and Ala230–Leu245. Thr236 bears the Phosphothreonine mark. Phosphoserine is present on Ser240. Positions Ser317 to Thr329 are enriched in low complexity. A coiled-coil region spans residues Arg383–Val439. Residues Pro623–Pro645 are disordered. Positions Ser627–Pro642 are enriched in low complexity. Ser648 is modified (phosphoserine). Residues Ile693–Thr718 form a disordered region. Residues Ser729–Lys757 adopt a coiled-coil conformation. 4 positions are modified to phosphoserine: Ser765, Ser766, Ser769, and Ser824. Residues Gly792 to Pro860 form a disordered region. Low complexity predominate over residues Val804–Ser824.

Interacts with CEP120.

It localises to the cytoplasm. It is found in the cytoskeleton. The protein resides in the microtubule organizing center. The protein localises to the centrosome. Its subcellular location is the centriole. It localises to the spindle. Regulator required for centriole duplication, for proper bipolar spindle formation and chromosome congression in mitosis. This chain is Spindle and centriole-associated protein 1 (Spice1), found in Mus musculus (Mouse).